The sequence spans 801 residues: MAETAAGLCRFKANYAVERKIEPFYKGGKAQLDQTGHYLFCVCGTKVNILDVASGALLRSLEQEDQEDITSFDLSPDDEVLVTASRALLLAQWAWREGTVTRLWKAIHTAPVASMAFDATSTLLATGGCDGAVRVWDIVQHYGTHHFRGSPGVVHLVAFHPDPTRLLLFSSAVDTSIRVWSLQDRSCLAVLTAHYSAVTSLSFSEGGHTMLSSGRDKICIVWDLQSYQTTRTVPVFESVEASVLLPEQPAPALGVKSSGLHFLTAGDQGILRVWEAASGQCVYTQPQMPGLRQELTHCTLARAADLLLTVTADHNLLLYEAHSLQLQKQFAGYSEEVLDVRFLGPSDSHIVVASNSPCLKVFELQTLACQILHGHTDIVLALDVFRKGWLFASCAKDQSIRIWKMNKAGQVACVAQGSGHTHSVGTICCSRLKESFLVTGSQDCTVKLWPLPEALLAKSTAADSGPVLLQAQTTRRCHDKDINSLAVSPNDKLLATGSQDRTAKLWALPQCQLLGVFTGHRRGLWNVQFSPTDQVLATASADGTIKLWALQDFSCLKTFEGHDASVLKVAFVSRGSQLLSSGSDGLLKLWTIKSNECVRTLDAHEDKVWGLHCSQLDDHAITGGSDSRIILWKDVTEAEQAEEQAKREEQVIKQQELDNLLHEKRYLRALGLAISLDRPHTVLTVIQAIRRDPEACEKLEATVLRLRRDQKEALLRFCVTWNTNSRHCHEAQAVLGVLLRHEAPEELLAYDGVRGSLEALLPYTERHFQRLSRTLQAATFLDFLWHNMKLSPCPAAAPPAL.

A2 is subject to N-acetylalanine. WD repeat units follow at residues 64 to 105, 107 to 146, 149 to 190, 193 to 232, 245 to 284, 290 to 329, 332 to 372, 374 to 413, 419 to 459, 477 to 516, 519 to 560, 562 to 602, and 604 to 642; these read EDQE…RLWK, IHTA…GTHH, GSPG…CLAV, AHYS…TTRT, LPEQ…CVYT, GLRQ…LQKQ, GYSE…CQIL, GHTD…QVAC, GHTH…LAKS, CHDK…LLGV, GHRR…KTFE, HDAS…RTLD, and HEDK…EQAE. S257 is modified (phosphoserine). A Glycyl lysine isopeptide (Lys-Gly) (interchain with G-Cter in SUMO2) cross-link involves residue K407.

As to quaternary structure, part of the small subunit (SSU) processome, composed of more than 70 proteins and the RNA chaperone small nucleolar RNA (snoRNA) U3.

The protein resides in the nucleus. It is found in the nucleolus. In terms of biological role, part of the small subunit (SSU) processome, first precursor of the small eukaryotic ribosomal subunit. During the assembly of the SSU processome in the nucleolus, many ribosome biogenesis factors, an RNA chaperone and ribosomal proteins associate with the nascent pre-rRNA and work in concert to generate RNA folding, modifications, rearrangements and cleavage as well as targeted degradation of pre-ribosomal RNA by the RNA exosome. The sequence is that of Transducin beta-like protein 3 (Tbl3) from Mus musculus (Mouse).